We begin with the raw amino-acid sequence, 622 residues long: UvrABC system protein C (622 aa).

Residues 13-92 (DKPGVYLMKN…IKENRPKYNV (80 aa)) form the GIY-YIG domain. The UVR domain occupies 205-240 (DELIKKIEEKMKRAAEKMDFEGAAHYRDQRQALLDI).

The protein belongs to the UvrC family. As to quaternary structure, interacts with UvrB in an incision complex.

It localises to the cytoplasm. In terms of biological role, the UvrABC repair system catalyzes the recognition and processing of DNA lesions. UvrC both incises the 5' and 3' sides of the lesion. The N-terminal half is responsible for the 3' incision and the C-terminal half is responsible for the 5' incision. The polypeptide is UvrABC system protein C (Alkaliphilus metalliredigens (strain QYMF)).